A 118-amino-acid polypeptide reads, in one-letter code: Basic phospholipase A2 PA-13 (118 aa).

Cystine bridges form between cysteine 11/cysteine 71, cysteine 27/cysteine 117, cysteine 29/cysteine 45, cysteine 44/cysteine 98, cysteine 51/cysteine 91, cysteine 60/cysteine 84, and cysteine 78/cysteine 89. Tyrosine 28, glycine 30, and glycine 32 together coordinate Ca(2+). Histidine 48 is an active-site residue. Aspartate 49 lines the Ca(2+) pocket. The active site involves aspartate 92.

This sequence belongs to the phospholipase A2 family. Group I subfamily. D49 sub-subfamily. Ca(2+) is required as a cofactor. Expressed by the venom gland.

It localises to the secreted. The enzyme catalyses a 1,2-diacyl-sn-glycero-3-phosphocholine + H2O = a 1-acyl-sn-glycero-3-phosphocholine + a fatty acid + H(+). PLA2 catalyzes the calcium-dependent hydrolysis of the 2-acyl groups in 3-sn-phosphoglycerides. This is Basic phospholipase A2 PA-13 from Pseudechis australis (Mulga snake).